A 248-amino-acid chain; its full sequence is tRNA (guanine-N(1)-)-methyltransferase (248 aa).

Residues Gly116 and 136–141 (VGDYVL) contribute to the S-adenosyl-L-methionine site.

The protein belongs to the RNA methyltransferase TrmD family. As to quaternary structure, homodimer.

The protein localises to the cytoplasm. The enzyme catalyses guanosine(37) in tRNA + S-adenosyl-L-methionine = N(1)-methylguanosine(37) in tRNA + S-adenosyl-L-homocysteine + H(+). Specifically methylates guanosine-37 in various tRNAs. This chain is tRNA (guanine-N(1)-)-methyltransferase, found in Psychromonas ingrahamii (strain DSM 17664 / CCUG 51855 / 37).